Here is a 250-residue protein sequence, read N- to C-terminus: 2,3-bisphosphoglycerate-dependent phosphoglycerate mutase (250 aa).

Substrate is bound by residues 10-17 (RHGESQWN), 23-24 (TG), Arg-62, 89-92 (ERHY), Lys-100, 116-117 (RR), and 185-186 (GN). The active-site Tele-phosphohistidine intermediate is His-11. Glu-89 acts as the Proton donor/acceptor in catalysis.

This sequence belongs to the phosphoglycerate mutase family. BPG-dependent PGAM subfamily. As to quaternary structure, homodimer.

The enzyme catalyses (2R)-2-phosphoglycerate = (2R)-3-phosphoglycerate. It functions in the pathway carbohydrate degradation; glycolysis; pyruvate from D-glyceraldehyde 3-phosphate: step 3/5. Catalyzes the interconversion of 2-phosphoglycerate and 3-phosphoglycerate. The protein is 2,3-bisphosphoglycerate-dependent phosphoglycerate mutase of Yersinia pseudotuberculosis serotype IB (strain PB1/+).